We begin with the raw amino-acid sequence, 508 residues long: Photosystem II CP47 reaction center protein (508 aa).

6 helical membrane-spanning segments follow: residues 21–36, 101–115, 140–156, 203–218, 237–252, and 457–472; these read AVHL…WAGS, IVLS…IWHW, GIHL…FGAF, IAAG…FHLS, VLSS…AFVV, and TFAL…HGAR.

The protein belongs to the PsbB/PsbC family. PsbB subfamily. In terms of assembly, PSII is composed of 1 copy each of membrane proteins PsbA, PsbB, PsbC, PsbD, PsbE, PsbF, PsbH, PsbI, PsbJ, PsbK, PsbL, PsbM, PsbT, PsbX, PsbY, PsbZ, Psb30/Ycf12, at least 3 peripheral proteins of the oxygen-evolving complex and a large number of cofactors. It forms dimeric complexes. The cofactor is Binds multiple chlorophylls. PSII binds additional chlorophylls, carotenoids and specific lipids..

It localises to the plastid. The protein localises to the chloroplast thylakoid membrane. Functionally, one of the components of the core complex of photosystem II (PSII). It binds chlorophyll and helps catalyze the primary light-induced photochemical processes of PSII. PSII is a light-driven water:plastoquinone oxidoreductase, using light energy to abstract electrons from H(2)O, generating O(2) and a proton gradient subsequently used for ATP formation. The protein is Photosystem II CP47 reaction center protein of Anthoceros angustus (Hornwort).